The primary structure comprises 438 residues: Serine hydroxymethyltransferase (438 aa).

(6S)-5,6,7,8-tetrahydrofolate is bound by residues Leu135 and 139-141; that span reads GHL. Lys244 is subject to N6-(pyridoxal phosphate)lysine. The disordered stretch occupies residues 361-383; the sequence is GVPNDPLPPVKTSGIRVGSPAGT.

It belongs to the SHMT family. Homodimer. It depends on pyridoxal 5'-phosphate as a cofactor.

It localises to the cytoplasm. It catalyses the reaction (6R)-5,10-methylene-5,6,7,8-tetrahydrofolate + glycine + H2O = (6S)-5,6,7,8-tetrahydrofolate + L-serine. Its pathway is one-carbon metabolism; tetrahydrofolate interconversion. It participates in amino-acid biosynthesis; glycine biosynthesis; glycine from L-serine: step 1/1. Catalyzes the reversible interconversion of serine and glycine with tetrahydrofolate (THF) serving as the one-carbon carrier. This reaction serves as the major source of one-carbon groups required for the biosynthesis of purines, thymidylate, methionine, and other important biomolecules. Also exhibits THF-independent aldolase activity toward beta-hydroxyamino acids, producing glycine and aldehydes, via a retro-aldol mechanism. The polypeptide is Serine hydroxymethyltransferase (Rhizorhabdus wittichii (strain DSM 6014 / CCUG 31198 / JCM 15750 / NBRC 105917 / EY 4224 / RW1) (Sphingomonas wittichii)).